The primary structure comprises 475 residues: 3-isopropylmalate dehydratase large subunit (475 aa).

3 residues coordinate [4Fe-4S] cluster: Cys-347, Cys-407, and Cys-410. Residues 418–442 (LAPGERSASTSNRNFEGRQGKGGRT) are disordered.

The protein belongs to the aconitase/IPM isomerase family. LeuC type 1 subfamily. As to quaternary structure, heterodimer of LeuC and LeuD. [4Fe-4S] cluster is required as a cofactor.

It carries out the reaction (2R,3S)-3-isopropylmalate = (2S)-2-isopropylmalate. It functions in the pathway amino-acid biosynthesis; L-leucine biosynthesis; L-leucine from 3-methyl-2-oxobutanoate: step 2/4. Catalyzes the isomerization between 2-isopropylmalate and 3-isopropylmalate, via the formation of 2-isopropylmaleate. The protein is 3-isopropylmalate dehydratase large subunit of Streptomyces griseus subsp. griseus (strain JCM 4626 / CBS 651.72 / NBRC 13350 / KCC S-0626 / ISP 5235).